The following is a 140-amino-acid chain: Putative nickel-responsive regulator 2 (140 aa).

4 residues coordinate Ni(2+): His77, His88, His90, and Cys96.

The protein belongs to the transcriptional regulatory CopG/NikR family. The cofactor is Ni(2+).

In terms of biological role, transcriptional regulator. This chain is Putative nickel-responsive regulator 2, found in Methanothermobacter thermautotrophicus (strain ATCC 29096 / DSM 1053 / JCM 10044 / NBRC 100330 / Delta H) (Methanobacterium thermoautotrophicum).